A 335-amino-acid chain; its full sequence is UPF0353 protein Mvan_2751 (335 aa).

Transmembrane regions (helical) follow at residues 18-38 and 67-87; these read WFFL…IVQM and LPAV…AGPT. A VWFA domain is found at 98–294; the sequence is VVMLVIDVSQ…EQLKQVFTNL (197 aa). A helical transmembrane segment spans residues 309-329; that stretch reads VGWLRIGSLVLALAALGALLI.

This sequence belongs to the UPF0353 family.

It localises to the cell membrane. The chain is UPF0353 protein Mvan_2751 from Mycolicibacterium vanbaalenii (strain DSM 7251 / JCM 13017 / BCRC 16820 / KCTC 9966 / NRRL B-24157 / PYR-1) (Mycobacterium vanbaalenii).